Consider the following 120-residue polypeptide: NAD(P)H-quinone oxidoreductase subunit 3 (120 aa).

The next 3 membrane-spanning stretches (helical) occupy residues 1 to 21, 64 to 84, and 89 to 109; these read MFVL…SLVP, MFAL…PWAV, and LGLL…VALV.

Belongs to the complex I subunit 3 family. NDH-1 can be composed of about 15 different subunits; different subcomplexes with different compositions have been identified which probably have different functions.

The protein resides in the cellular thylakoid membrane. It catalyses the reaction a plastoquinone + NADH + (n+1) H(+)(in) = a plastoquinol + NAD(+) + n H(+)(out). The enzyme catalyses a plastoquinone + NADPH + (n+1) H(+)(in) = a plastoquinol + NADP(+) + n H(+)(out). NDH-1 shuttles electrons from an unknown electron donor, via FMN and iron-sulfur (Fe-S) centers, to quinones in the respiratory and/or the photosynthetic chain. The immediate electron acceptor for the enzyme in this species is believed to be plastoquinone. Couples the redox reaction to proton translocation, and thus conserves the redox energy in a proton gradient. Cyanobacterial NDH-1 also plays a role in inorganic carbon-concentration. This chain is NAD(P)H-quinone oxidoreductase subunit 3, found in Nostoc punctiforme (strain ATCC 29133 / PCC 73102).